Reading from the N-terminus, the 589-residue chain is Serine/threonine-protein phosphatase 2A 65 kDa regulatory subunit A alpha isoform (589 aa).

Ala2 is subject to N-acetylalanine. HEAT repeat units follow at residues 8–46, 47–84, 85–123, 124–161, 162–200, 201–239, 240–278, 279–321, 322–360, 361–399, 400–438, 439–477, 478–516, 517–555, and 556–589; these read DSLY…GVER, TRSE…GGPE, YVHC…SPSD, LEAH…VSSA, VKAE…ELDN, VKSE…PQED, LEAL…GPEI, TKTD…RENV, IMTQ…GKDN, TIEH…GIRQ, LSQS…GVEF, FDEK…GKEW, AHAT…GQDI, TTKH…DNST, and LQSE…LSLA. Lys280 is subject to N6-acetyllysine.

This sequence belongs to the phosphatase 2A regulatory subunit A family. PP2A consists of a common heterodimeric core enzyme, composed of PPP2CA a 36 kDa catalytic subunit (subunit C) and PPP2R1A a 65 kDa constant regulatory subunit (PR65 or subunit A), that associates with a variety of regulatory subunits. Proteins that associate with the core dimer include three families of regulatory subunits B (the R2/B/PR55/B55, R3/B''/PR72/PR130/PR59 and R5/B'/B56 families), the 48 kDa variable regulatory subunit, viral proteins, and cell signaling molecules. Found in a complex with at least ARL2, PPP2CB, PPP2R1A, PPP2R2A, PPP2R5E and TBCD. Interacts with the PP2A C catalytic subunit PPP2CA. Interacts with the PP2A B subunit PPP2R2A. Interacts with the PP2A B subunit PPP2R5D. Interacts with FOXO1; the interaction dephosphorylates FOXO1 on AKT-mediated phosphorylation sites. Interacts with IPO9. Interacts with TP53 and SGO1. Interacts with PLA2G16; this interaction might decrease PP2A activity. Interacts with CTTNBP2NL. Interacts with GNA12; the interaction promotes protein phosphatase 2A activation causing dephosphorylation of MAPT. Interacts with CIP2A; this interaction stabilizes CIP2A. Interacts with PABIR1/FAM122A. Interacts with ADCY8; antagonizes interaction between ADCY8 and calmodulin. Interacts with CRTC3 (when phosphorylated at 'Ser-391'). Interacts with SPRY2. Part of the core of STRIPAK complexes composed of PP2A catalytic and scaffolding subunits, the striatins (PP2A regulatory subunits), the striatin-associated proteins MOB4, STRIP1 and STRIP2, PDCD10 and members of the STE20 kinases, such as STK24 and STK26. Component of the Integrator-PP2A (INTAC) complex, composed of the Integrator core complex and protein phosphatase 2A subunits PPP2CA and PPP2R1A.

The protein localises to the cytoplasm. It is found in the nucleus. The protein resides in the chromosome. It localises to the centromere. Its subcellular location is the lateral cell membrane. The protein localises to the cell projection. It is found in the dendrite. The PR65 subunit of protein phosphatase 2A serves as a scaffolding molecule to coordinate the assembly of the catalytic subunit and a variable regulatory B subunit. Upon interaction with GNA12 promotes dephosphorylation of microtubule associated protein TAU/MAPT. Required for proper chromosome segregation and for centromeric localization of SGO1 in mitosis. Together with RACK1 adapter, mediates dephosphorylation of AKT1 at 'Ser-473', preventing AKT1 activation and AKT-mTOR signaling pathway. Dephosphorylation of AKT1 is essential for regulatory T-cells (Treg) homeostasis and stability. Part of the striatin-interacting phosphatase and kinase (STRIPAK) complexes. STRIPAK complexes have critical roles in protein (de)phosphorylation and are regulators of multiple signaling pathways including Hippo, MAPK, nuclear receptor and cytoskeleton remodeling. Different types of STRIPAK complexes are involved in a variety of biological processes such as cell growth, differentiation, apoptosis, metabolism and immune regulation. Key mediator of a quality checkpoint during transcription elongation as part of the Integrator-PP2A (INTAC) complex. The INTAC complex drives premature transcription termination of transcripts that are unfavorably configured for transcriptional elongation: within the INTAC complex, acts as a scaffolding subunit for PPP2CA, which catalyzes dephosphorylation of the C-terminal domain (CTD) of Pol II subunit POLR2A/RPB1 and SUPT5H/SPT5, thereby preventing transcriptional elongation. Regulates the recruitment of the SKA complex to kinetochores. This Mus musculus (Mouse) protein is Serine/threonine-protein phosphatase 2A 65 kDa regulatory subunit A alpha isoform (Ppp2r1a).